A 501-amino-acid polypeptide reads, in one-letter code: Putative antiporter subunit mnhD2 (501 aa).

Helical transmembrane passes span 4 to 24 (SNLL…LVFI), 33 to 53 (IFSI…LIYV), 79 to 99 (LSLL…AYGF), 109 to 129 (YYLP…FLTA), 131 to 151 (LFNI…LITL), 162 to 182 (IIYV…VGLL), 207 to 227 (IVIV…LVLF), 245 to 265 (FAAL…TLIF), 274 to 294 (PLLV…VLAY), 309 to 329 (IGFI…GAIF), 334 to 354 (DIVV…ITGL), 369 to 389 (FFGV…PFSG), 409 to 429 (LALM…IFFV), and 452 to 472 (NLIG…PLLF).

Belongs to the CPA3 antiporters (TC 2.A.63) subunit D family. May form a heterooligomeric complex that consists of seven subunits: mnhA2, mnhB2, mnhC2, mnhD2, mnhE2, mnhF2 and mnhG2.

It is found in the cell membrane. In Staphylococcus saprophyticus subsp. saprophyticus (strain ATCC 15305 / DSM 20229 / NCIMB 8711 / NCTC 7292 / S-41), this protein is Putative antiporter subunit mnhD2 (mnhD2).